We begin with the raw amino-acid sequence, 529 residues long: MSRGMSGLEDSSDLVVSPYVRMGGLTTDPVPTGGDDPHKVAMLGLTFDDVLLLPAASDVVPATADTSSQLTKKIRLKVPLVSSAMDTVTESRMAIAMARAGGMGVLHRNLPVAEQAGQVEMVKRSEAGMVTDPVTCRPDNTLAQVDALCARFRISGLPVVDDDGALVGIITNRDMRFEVDQSKQVAEVMTKAPLITAQEGVSASAALGLLRRNKIEKLPVVDGRGRLTGLITVKDFVKTEQHPLATKDSDGRLLVGAAVGVGGDAWVRAMMLVDAGVDVLVVDTAHAHNRLVLDMVGKLKSEVGDRVEVVGGNVATRSAAAALVDAGADAVKVGVGPGSICTTRVVAGVGAPQITAILEAVAACRPAGVPVIADGGLQYSGDIAKALAAGASTAMLGSLLAGTAEAPGELIFVNGKQYKSYRGMGSLGAMRGRGGATSYSKDRYFADDALSEDKLVPEGIEGRVPFRGPLSSVIHQLTGGLRAAMGYTGSPTIEVLQQAQFVRITPAGLKESHPHDVAMTVEAPNYYAR.

CBS domains follow at residues 129-185 (MVTD…SKQV) and 189-246 (MTKA…PLAT). Residues Asp283 and 334–336 (GVG) contribute to the NAD(+) site. Gly336 and Gly338 together coordinate K(+). Ser339 contributes to the IMP binding site. Residue Cys341 participates in K(+) binding. Cys341 (thioimidate intermediate) is an active-site residue. IMP contacts are provided by residues 374–376 (DGG), 397–398 (GS), and 421–425 (YRGMG). Catalysis depends on Arg443, which acts as the Proton acceptor. Position 458 (Glu458) interacts with IMP. K(+)-binding residues include Glu511, Ser512, and His513.

Belongs to the IMPDH/GMPR family. As to quaternary structure, homotetramer. The cofactor is K(+).

It catalyses the reaction IMP + NAD(+) + H2O = XMP + NADH + H(+). It participates in purine metabolism; XMP biosynthesis via de novo pathway; XMP from IMP: step 1/1. Mycophenolic acid (MPA) is a non-competitive inhibitor that prevents formation of the closed enzyme conformation by binding to the same site as the amobile flap. In contrast, mizoribine monophosphate (MZP) is a competitive inhibitor that induces the closed conformation. MPA is a potent inhibitor of mammalian IMPDHs but a poor inhibitor of the bacterial enzymes. MZP is a more potent inhibitor of bacterial IMPDH. Its function is as follows. Catalyzes the conversion of inosine 5'-phosphate (IMP) to xanthosine 5'-phosphate (XMP), the first committed and rate-limiting step in the de novo synthesis of guanine nucleotides, and therefore plays an important role in the regulation of cell growth. The polypeptide is Inosine-5'-monophosphate dehydrogenase (Mycobacterium bovis (strain ATCC BAA-935 / AF2122/97)).